Here is a 261-residue protein sequence, read N- to C-terminus: Early 31 kDa protein (261 aa).

A disordered region spans residues 230-261 (INKYSADTDEEEEEEEDNAEDTEEEEEEEADQ). Acidic residues predominate over residues 236–261 (DTDEEEEEEEDNAEDTEEEEEEEADQ).

This chain is Early 31 kDa protein, found in Frog virus 3 (isolate Goorha) (FV-3).